The sequence spans 331 residues: MLIAQRPTLTEESLNPQRSRFTIEPLEPGFGYTLGNSLRRTLLSSIPGAAVTSVRISGALHEFTTLPGVQEDVTEILLNIKGIVLTSEYDEPVVMYLRKSGKGEAVAGDITPPAGVTIANPEQHIATLADDGELEIEFTVERGRGYVPAQMNKQDNDEIGRIPVDSIYSPVLKVSYKVEATRVEQRTDFDKLILDVETKPAISPRDAVASAGSTLVELFGLCRELNAQAEGVEVGPAPVAEETNPEMAVPIEDLNLTQRSYNCLKREGIHTIGELVSHTEQDLLDIRNFGMKSIDEVKEKLQTLGLSLKSSPMAFDTNNLEGGTFFSPEDE.

An alpha N-terminal domain (alpha-NTD) region spans residues 1–226; sequence MLIAQRPTLT…ELFGLCRELN (226 aa). The tract at residues 243 to 331 is alpha C-terminal domain (alpha-CTD); that stretch reads TNPEMAVPIE…GGTFFSPEDE (89 aa).

This sequence belongs to the RNA polymerase alpha chain family. As to quaternary structure, homodimer. The RNAP catalytic core consists of 2 alpha, 1 beta, 1 beta' and 1 omega subunit. When a sigma factor is associated with the core the holoenzyme is formed, which can initiate transcription.

It carries out the reaction RNA(n) + a ribonucleoside 5'-triphosphate = RNA(n+1) + diphosphate. DNA-dependent RNA polymerase catalyzes the transcription of DNA into RNA using the four ribonucleoside triphosphates as substrates. The chain is DNA-directed RNA polymerase subunit alpha from Bifidobacterium longum (strain NCC 2705).